Here is a 42-residue protein sequence, read N- to C-terminus: Cytochrome b6-f complex subunit 7 (42 aa).

Residues 19-37 traverse the membrane as a helical segment; that stretch reads AVVCFSMTLFGLSLGFGLL.

Belongs to the PetM family. In terms of assembly, the 4 large subunits of the cytochrome b6-f complex are cytochrome b6, subunit IV (17 kDa polypeptide, PetD), cytochrome f and the Rieske protein, while the 4 small subunits are PetG, PetL, PetM and PetN. The complex functions as a dimer.

It is found in the plastid. The protein resides in the chloroplast thylakoid membrane. Functionally, component of the cytochrome b6-f complex, which mediates electron transfer between photosystem II (PSII) and photosystem I (PSI), cyclic electron flow around PSI, and state transitions. This is Cytochrome b6-f complex subunit 7 from Phaeodactylum tricornutum (strain CCAP 1055/1).